The sequence spans 89 residues: Acylphosphatase (89 aa).

An Acylphosphatase-like domain is found at 4 to 89 (SYIAHISGRV…WQEHHFFSIG (86 aa)). Residues arginine 19 and asparagine 37 contribute to the active site.

Belongs to the acylphosphatase family.

It carries out the reaction an acyl phosphate + H2O = a carboxylate + phosphate + H(+). The protein is Acylphosphatase (acyP) of Colwellia psychrerythraea (strain 34H / ATCC BAA-681) (Vibrio psychroerythus).